The following is a 72-amino-acid chain: uncharacterized protein (72 aa).

Positions 1–22 (MQSNFIFATLLVLLSLLTFTYA) are cleaved as a signal peptide. Residues 23–28 (SGSSSM) are Extracellular-facing. Residues 29 to 49 (TSSSMPMFGGAIVAAFAFAIF) form a helical membrane-spanning segment. Topologically, residues 50 to 72 (SRLAQNFAPRAIFSLLPYHSVSC) are cytoplasmic.

It localises to the membrane. This is an uncharacterized protein from Dictyostelium discoideum (Social amoeba).